A 487-amino-acid polypeptide reads, in one-letter code: Serine/threonine-protein kinase 4 (487 aa).

Met1 is modified (N-acetylmethionine). The residue at position 3 (Thr3) is a Phosphothreonine. One can recognise a Protein kinase domain in the interval 30–281 (FDVLEKLGEG…ATQLLQHPFV (252 aa)). Residues 36 to 44 (LGEGSYGSV) and Lys59 each bind ATP. Asp149 functions as the Proton acceptor in the catalytic mechanism. A Phosphothreonine; by autocatalysis modification is found at Thr183. Phosphoserine is present on Ser265. Positions 289–311 (ILRDLINEAMDVKLKRQEAQQRE) form a coiled coil. Positions 305 to 334 (QEAQQREVDQDDEENSEEDEMDSGTMVRAA) are disordered. Residues 313–326 (DQDDEENSEEDEMD) are compositionally biased toward acidic residues. Residue Ser320 is modified to Phosphoserine. 2 positions are modified to phosphothreonine: Thr340 and Thr367. Phosphothreonine; by PKB/AKT1 is present on Thr387. Ser410 carries the post-translational modification Phosphoserine. Residue Tyr433 is modified to Phosphotyrosine. An SARAH domain is found at 433 to 480 (YEFLKSWTVEDLQKRLLALDPMMEQEMEEIRQKYRSKRQPILDAIEAK).

The protein belongs to the protein kinase superfamily. STE Ser/Thr protein kinase family. STE20 subfamily. As to quaternary structure, homodimer; mediated via the coiled-coil region. Interacts with NORE1, which inhibits autoactivation. Interacts with and stabilizes SAV1. Interacts with RASSF1. Interacts with FOXO3. Interacts with RASSF2 (via SARAH domain). Interacts with AR, PKB/AKT1, TNNI3 and SIRT1. Interacts with MARK3 and SCRIB in the presence of DLG5. Interacts with DLG5 (via PDZ domain 3). Mg(2+) is required as a cofactor. In terms of processing, autophosphorylated on serine and threonine residues. Phosphorylation at Thr-387 by PKB/AKT1, leads to inhibition of its: kinase activity, nuclear translocation and autophosphorylation at Thr-183. It also diminishes its cleavage by caspases and its ability to phosphorylate FOXO3. Post-translationally, proteolytically cleaved by caspase-3 during apoptosis at Asp-326 resulting in a 37 kDa form. Proteolytic cleavage results in kinase activation and nuclear translocation of the truncated form (MST1/N).

It is found in the cytoplasm. The protein localises to the nucleus. It carries out the reaction L-seryl-[protein] + ATP = O-phospho-L-seryl-[protein] + ADP + H(+). It catalyses the reaction L-threonyl-[protein] + ATP = O-phospho-L-threonyl-[protein] + ADP + H(+). Inhibited by the C-terminal non-catalytic region. Activated by caspase-cleavage. Full activation also requires homodimerization and autophosphorylation of Thr-183. Activated by RASSF1 which acts by preventing its dephosphorylation. Functionally, stress-activated, pro-apoptotic kinase which, following caspase-cleavage, enters the nucleus and induces chromatin condensation followed by internucleosomal DNA fragmentation. Key component of the Hippo signaling pathway which plays a pivotal role in organ size control and tumor suppression by restricting proliferation and promoting apoptosis. The core of this pathway is composed of a kinase cascade wherein STK3/MST2 and STK4/MST1, in complex with its regulatory protein SAV1, phosphorylates and activates LATS1/2 in complex with its regulatory protein MOB1, which in turn phosphorylates and inactivates YAP1 oncoprotein and WWTR1/TAZ. Phosphorylation of YAP1 by LATS2 inhibits its translocation into the nucleus to regulate cellular genes important for cell proliferation, cell death, and cell migration. STK3/MST2 and STK4/MST1 are required to repress proliferation of mature hepatocytes, to prevent activation of facultative adult liver stem cells (oval cells), and to inhibit tumor formation. Phosphorylates 'Ser-14' of histone H2B (H2BS14ph) during apoptosis. Phosphorylates FOXO3 upon oxidative stress, which results in its nuclear translocation and cell death initiation. Phosphorylates MOBKL1A, MOBKL1B and RASSF2. Phosphorylates TNNI3 (cardiac Tn-I) and alters its binding affinity to TNNC1 (cardiac Tn-C) and TNNT2 (cardiac Tn-T). Phosphorylates FOXO1 on 'Ser-212' and regulates its activation and stimulates transcription of PMAIP1 in a FOXO1-dependent manner. Phosphorylates SIRT1 and inhibits SIRT1-mediated p53/TP53 deacetylation, thereby promoting p53/TP53 dependent transcription and apoptosis upon DNA damage. Acts as an inhibitor of PKB/AKT1. Phosphorylates AR on 'Ser-650' and suppresses its activity by intersecting with PKB/AKT1 signaling and antagonizing formation of AR-chromatin complexes. The sequence is that of Serine/threonine-protein kinase 4 (Stk4) from Mus musculus (Mouse).